The chain runs to 506 residues: Ribose import ATP-binding protein RbsA 2 (506 aa).

2 ABC transporter domains span residues leucine 5 to arginine 241 and alanine 254 to threonine 498. Glycine 37–serine 44 lines the ATP pocket.

It belongs to the ABC transporter superfamily. Ribose importer (TC 3.A.1.2.1) family. In terms of assembly, the complex is composed of an ATP-binding protein (RbsA), two transmembrane proteins (RbsC) and a solute-binding protein (RbsB).

The protein resides in the cell inner membrane. The catalysed reaction is D-ribose(out) + ATP + H2O = D-ribose(in) + ADP + phosphate + H(+). Functionally, part of the ABC transporter complex RbsABC involved in ribose import. Responsible for energy coupling to the transport system. This is Ribose import ATP-binding protein RbsA 2 from Burkholderia cenocepacia (strain HI2424).